We begin with the raw amino-acid sequence, 229 residues long: 7-cyano-7-deazaguanine synthase (229 aa).

L14–L24 provides a ligand contact to ATP. The Zn(2+) site is built by C192, C200, C203, and C206.

The protein belongs to the QueC family. It depends on Zn(2+) as a cofactor.

The enzyme catalyses 7-carboxy-7-deazaguanine + NH4(+) + ATP = 7-cyano-7-deazaguanine + ADP + phosphate + H2O + H(+). It functions in the pathway purine metabolism; 7-cyano-7-deazaguanine biosynthesis. In terms of biological role, catalyzes the ATP-dependent conversion of 7-carboxy-7-deazaguanine (CDG) to 7-cyano-7-deazaguanine (preQ(0)). The chain is 7-cyano-7-deazaguanine synthase from Laribacter hongkongensis (strain HLHK9).